We begin with the raw amino-acid sequence, 188 residues long: Probable DNA-directed RNA polymerase subunit delta (188 aa).

One can recognise an HTH HARE-type domain in the interval 14 to 83 (LSMIEVARAI…GDNKWGLRSW (70 aa)). The interval 117 to 188 (GDEDAIDYSD…EDDEDDEEEE (72 aa)) is disordered.

It belongs to the RpoE family. As to quaternary structure, RNAP is composed of a core of 2 alpha, a beta and a beta' subunits. The core is associated with a delta subunit and one of several sigma factors.

Functionally, participates in both the initiation and recycling phases of transcription. In the presence of the delta subunit, RNAP displays an increased specificity of transcription, a decreased affinity for nucleic acids, and an increased efficiency of RNA synthesis because of enhanced recycling. In Streptococcus uberis (strain ATCC BAA-854 / 0140J), this protein is Probable DNA-directed RNA polymerase subunit delta.